The following is a 213-amino-acid chain: uncharacterized protein (213 aa).

Residues glycine 53, glutamate 74, and aspartate 96 each contribute to the S-adenosyl-L-methionine site.

The protein belongs to the methyltransferase superfamily. YrrT family.

Its function is as follows. Could be a S-adenosyl-L-methionine-dependent methyltransferase. This is an uncharacterized protein from Oceanobacillus iheyensis (strain DSM 14371 / CIP 107618 / JCM 11309 / KCTC 3954 / HTE831).